The primary structure comprises 518 residues: Forkhead box protein H1 (518 aa).

Positions 72 to 113 are disordered; that stretch reads GSMYGLSPGTHEGSCTHTHEGPKDSMAGDQTRSRKSKKKNYH. Positions 104–113 are enriched in basic residues; it reads SRKSKKKNYH. Residues 117 to 213 constitute a DNA-binding region (fork-head); that stretch reads KPPYSYLAMI…MKLQNTALTR (97 aa). The interval 318–397 is disordered; the sequence is KPTRNARSPG…NYSPIEPPKK (80 aa). Residues 329–346 are compositionally biased toward low complexity; it reads STIHSTYSSSSSSISTIS. The interval 380-506 is SMAD-interaction domain (SID); that stretch reads TSSDPDTGNY…PSFLSQCLGS (127 aa). The short motif at 405–409 is the Fast/FoxH1 motif 1 (FM1) element; that stretch reads LPTSY. The Fast/FoxH1 motif 2 (FM2) motif lies at 415–421; sequence PNVVAPP. An SMAD interaction motif (SIM) motif is present at residues 470–491; that stretch reads LDNMLRAMPPNKSVFDVLTSHP.

In terms of assembly, ARF1 contains 2 smad2s, 1 smad4 and 1 foxh1/fast-1 protein. Interaction with smad4 is most likely indirect through interaction with the MH2 domain of smad2. Binds to the MH2 domain of smad3, which can incorporate into the ARF1 complex. The ARF1 and ARF2 complexes are activated by distinct TGF-beta family members; formation of ARF1 is promoted by activin. Interacts (via Fork-head domain) with gtf2ird1/wbscr11 (via repeats 4-5). In terms of tissue distribution, highly expressed in the animal cap (prospective ectoderm) and prospective mesoderm of stage 10.25 embryos.

The protein localises to the nucleus. Transcriptional activator. Recognizes and binds to the DNA sequence 5'-TGT[GT][GT]ATT-3'. Upon TGF-beta induction, forms a transcriptionally active complex with smad2 and smad4 called activin-responsive factor 1 (ARF1), which binds a site on the mix-B/mix.2 promoter called the activin response element (ARE). Binds to activated smads and the ARE with much lower affinity than fast3. Necessary for the first steps in mesoderm specification, directly inducing mesodermal genes. Acts with fast3 to control the convergent extension movements of gastrulation. Binds to the proximal element (PE) of the gsc gene and cooperates with gtf2ird1/wbscr11 and SMAD proteins to regulate gsc transcription. The polypeptide is Forkhead box protein H1 (foxh1) (Xenopus laevis (African clawed frog)).